The primary structure comprises 214 residues: GTP-binding nuclear protein GSP1 (214 aa).

In terms of domain architecture, Small GTPase Ran-type spans 4–172 (RELTYKICLI…LHLARIFTGR (169 aa)). 17–22 (GVGKTT) is a binding site for GTP. Positions 34–42 (KNYNATVGA) are switch-I. GTP is bound by residues G66, 121-124 (NKID), and 151-153 (SAK). Positions 66–82 (GQEKKAVLKDVYYIGAS) are switch-II.

The protein belongs to the small GTPase superfamily. Ran family. Found in a nuclear export complex with RanGTP, exportin and pre-miRNA.

It localises to the nucleus. In terms of biological role, GTP-binding protein involved in nucleocytoplasmic transport. Required for the import of protein into the nucleus and also for RNA export. This Encephalitozoon cuniculi (strain GB-M1) (Microsporidian parasite) protein is GTP-binding nuclear protein GSP1 (GSP1).